Here is a 62-residue protein sequence, read N- to C-terminus: Small ribosomal subunit protein eS17 (62 aa).

The protein belongs to the eukaryotic ribosomal protein eS17 family.

The sequence is that of Small ribosomal subunit protein eS17 from Methanocaldococcus jannaschii (strain ATCC 43067 / DSM 2661 / JAL-1 / JCM 10045 / NBRC 100440) (Methanococcus jannaschii).